The following is a 320-amino-acid chain: MPFITLERILAHTSFFLLFFVTFIYWGKFLYINIKPITILGEISMKIACFFITTFLLIRWSSSGHFPLSNLYESSMFLSWSFTLIHLILENKSKNTWLGIITAPSAMLTHGFATLSLPKEMQESVFLVPALQSHWLMMHVTMMMLSYSTLLCGSLLAITILIITLTKQKNLPILTSYFNFPFNSFIFKNLLQPMENEILSYKTQKVFSFINFRKWQLIKELDNWSYRVISLGFPLLTIGILSGAVWANEAWGSYWNWDPKETWALITWLIFAIYLHTRMIKGWQGKKPAIIASLGFFIVWICYLGVNLLGKGLHSYGWLI.

Helical transmembrane passes span 14–34 (SFFL…YINI), 37–57 (ITIL…TFLL), 68–88 (LSNL…IHLI), 97–117 (WLGI…TLSL), 143–163 (MMLS…ILII), 228–248 (VISL…VWAN), 263–283 (WALI…IKGW), and 289–309 (AIIA…VNLL).

It belongs to the CcmF/CycK/Ccl1/NrfE/CcsA family. In terms of assembly, may interact with Ccs1.

The protein localises to the plastid. Its subcellular location is the chloroplast thylakoid membrane. Functionally, required during biogenesis of c-type cytochromes (cytochrome c6 and cytochrome f) at the step of heme attachment. This is Cytochrome c biogenesis protein CcsA from Marchantia polymorpha (Common liverwort).